The sequence spans 1135 residues: Potassium channel subfamily T member 2 (1135 aa).

At 1–63 the chain is on the cytoplasmic side; it reads MVDLESEVPP…KNQRSSLRIR (63 aa). A helical transmembrane segment spans residues 64–84; the sequence is LFNFSLKLLSCLLYIIRVLLE. Residues 85–101 are Extracellular-facing; it reads KPSQGSEWSHIFWVNRS. A helical transmembrane segment spans residues 102–122; that stretch reads LPLWGLQVSVALISLFETILL. Residues 123 to 137 lie on the Cytoplasmic side of the membrane; the sequence is GYLSYKGNIWEQILR. The chain crosses the membrane as a helical span at residues 138–158; the sequence is IPFILEIINAVPFIISIFWPT. Topologically, residues 159–164 are extracellular; the sequence is LRNLFV. Residues 165 to 185 form a helical membrane-spanning segment; that stretch reads PVFLNCWLAKHALENMINDLH. Residues 186-198 are Cytoplasmic-facing; that stretch reads RAIQRTQSAMFNQ. The helical transmembrane segment at 199–219 threads the bilayer; the sequence is VLILISTLLCLIFTCICGIQH. At 220–228 the chain is on the extracellular side; it reads LERIGKKLN. Residues 229 to 249 constitute an intramembrane region (pore-forming); sequence LFDSLYFCIVTFSTVGFGDVT. Topologically, residues 250–256 are extracellular; sequence PETWSSK. The helical transmembrane segment at 257–277 threads the bilayer; the sequence is LFVVAMICVALVVLPIQFEQL. The Cytoplasmic segment spans residues 278 to 1135; that stretch reads AYLWMERQKS…VQDSREETQL (858 aa). 2 consecutive RCK N-terminal domains span residues 299–435 and 718–858; these read EKHV…DHVV and NKLI…CYSL. 2 disordered regions span residues 982–1036 and 1111–1135; these read DTKD…AEKI and PNSE…ETQL. Positions 1010 to 1030 are enriched in basic residues; that stretch reads LRRKSMQWARRLSRKGPKHSG. Polar residues predominate over residues 1111–1122; that stretch reads PNSEPSRKNSIC.

Belongs to the potassium channel family. Calcium-activated (TC 1.A.1.3) subfamily. KCa4.2/KCNT2 sub-subfamily. Homotetramer. Forms heteromeric channels with KCNT1. These heterodimer channels differ from the homomers in their unitary conductance, kinetic behavior, subcellular localization, and response to activation of protein kinase C. In terms of processing, phosphorylated by protein kinase C. Phosphorylation of the C-terminal domain inhibits channel activity. Within the dorsal root ganglia (DRGs), exclusively expressed in small-sized and medium-sized calcitonin gene-related peptide (CGRP)-containing DRG neurons.

It localises to the cell membrane. The catalysed reaction is K(+)(in) = K(+)(out). With respect to regulation, are normally in a closed state unless activated by an increase in intracellular Na(+) and Cl(-). Inhibited upon stimulation of G-protein coupled receptors, such as CHRM1 and GRM1. There is conflicting data about the effect of ATP on KNCT2 channels activity. Intracellular ATP was initially report to inhibit the channel activity. However, others studies conclude that KNCT2 channels are not inhibited by intracellular ATP. Functionally, sodium-activated and chloride-activated potassium channel. Produces rapidly activating outward rectifier K(+) currents. Contributes to regulate neuronal excitability. The chain is Potassium channel subfamily T member 2 (Kcnt2) from Mus musculus (Mouse).